The sequence spans 627 residues: Phosphomethylpyrimidine synthase (627 aa).

The segment covering 1 to 21 has biased composition (polar residues); it reads MSAQQQKNLSESAQVDQQSVQ. Residues 1-32 are disordered; it reads MSAQQQKNLSESAQVDQQSVQPFPRSQKVYVQ. Substrate-binding positions include asparagine 231, methionine 260, tyrosine 289, histidine 325, 345-347, 386-389, and glutamate 425; these read SRG and DGLR. Histidine 429 is a Zn(2+) binding site. Position 452 (tyrosine 452) interacts with substrate. Residue histidine 493 coordinates Zn(2+). 3 residues coordinate [4Fe-4S] cluster: cysteine 573, cysteine 576, and cysteine 581.

Belongs to the ThiC family. As to quaternary structure, homodimer. [4Fe-4S] cluster serves as cofactor.

The enzyme catalyses 5-amino-1-(5-phospho-beta-D-ribosyl)imidazole + S-adenosyl-L-methionine = 4-amino-2-methyl-5-(phosphooxymethyl)pyrimidine + CO + 5'-deoxyadenosine + formate + L-methionine + 3 H(+). It functions in the pathway cofactor biosynthesis; thiamine diphosphate biosynthesis. Its function is as follows. Catalyzes the synthesis of the hydroxymethylpyrimidine phosphate (HMP-P) moiety of thiamine from aminoimidazole ribotide (AIR) in a radical S-adenosyl-L-methionine (SAM)-dependent reaction. This chain is Phosphomethylpyrimidine synthase, found in Ectopseudomonas mendocina (strain ymp) (Pseudomonas mendocina).